We begin with the raw amino-acid sequence, 223 residues long: Small ribosomal subunit protein uS3 (223 aa).

The 77-residue stretch at 39–115 (IRKYIEKNLA…RVFINIVEIK (77 aa)) folds into the KH type-2 domain.

The protein belongs to the universal ribosomal protein uS3 family. Part of the 30S ribosomal subunit. Forms a tight complex with proteins S10 and S14.

In terms of biological role, binds the lower part of the 30S subunit head. Binds mRNA in the 70S ribosome, positioning it for translation. The sequence is that of Small ribosomal subunit protein uS3 from Leuconostoc citreum (strain KM20).